Reading from the N-terminus, the 334-residue chain is MANIIPKIAIIGEGVIGCTSALQISKAIPNAKITVLHDKPFKKSCSAGPAGLFRIDYEENTEYGRASFAWFSHLYRTTKGSETGVKLVSGHIQSDNLESLKQQQRAYGDIVYNFRFLDDRERLDIFPEPSKHCIHYTAYASEGNKYVPYLKNLLLEQKIEFKQQEVTSLDAVADAGYDVIVNCAGLYGGKLAGDDDTCYPIRGVILEVDAPWHKHFNYRDFTTFTIPKEHSVVVGSTKQDNRWDLEITDEDRNDILKRYIALHPGMREPKIIKEWSALRPGRKHVRIEAQKRTSVGNSKDYMVVHHYGHGSNGFTLGWGTAIEATKLVKTALGL.

D38, K39, S46, G310, and T315 together coordinate FAD.

This sequence belongs to the DAMOX/DASOX family. FAD serves as cofactor. In terms of tissue distribution, expressed in the intestinal cells, pharyngeal muscles, and body wall muscles in adult hermaphrodites.

It is found in the cytoplasm. It catalyses the reaction D-aspartate + O2 + H2O = oxaloacetate + H2O2 + NH4(+). The enzyme catalyses D-glutamate + O2 + H2O = H2O2 + 2-oxoglutarate + NH4(+). Inhibited by thiolactomycin. In terms of biological role, selectively catalyzes the oxidative deamination of acidic amino acids. May play a role in the egg-laying events and early development of the worm, in addition to quality control of the germ cells. This Caenorhabditis elegans protein is D-aspartate oxidase 2 (ddo-2).